Here is a 274-residue protein sequence, read N- to C-terminus: Formamidopyrimidine-DNA glycosylase (274 aa).

Catalysis depends on P2, which acts as the Schiff-base intermediate with DNA. The active-site Proton donor is the E3. K58 functions as the Proton donor; for beta-elimination activity in the catalytic mechanism. Positions 92 and 111 each coordinate DNA. The FPG-type; degenerate zinc finger occupies 239-273; sequence HVYGREGEPCERCGTIIEKIKVAQRGTHFCPLEQR. Catalysis depends on R263, which acts as the Proton donor; for delta-elimination activity.

This sequence belongs to the FPG family. In terms of assembly, monomer. Zn(2+) is required as a cofactor.

It catalyses the reaction Hydrolysis of DNA containing ring-opened 7-methylguanine residues, releasing 2,6-diamino-4-hydroxy-5-(N-methyl)formamidopyrimidine.. The enzyme catalyses 2'-deoxyribonucleotide-(2'-deoxyribose 5'-phosphate)-2'-deoxyribonucleotide-DNA = a 3'-end 2'-deoxyribonucleotide-(2,3-dehydro-2,3-deoxyribose 5'-phosphate)-DNA + a 5'-end 5'-phospho-2'-deoxyribonucleoside-DNA + H(+). In terms of biological role, involved in base excision repair of DNA damaged by oxidation or by mutagenic agents. Acts as a DNA glycosylase that recognizes and removes damaged bases. Has a preference for oxidized purines, such as 7,8-dihydro-8-oxoguanine (8-oxoG). Has AP (apurinic/apyrimidinic) lyase activity and introduces nicks in the DNA strand. Cleaves the DNA backbone by beta-delta elimination to generate a single-strand break at the site of the removed base with both 3'- and 5'-phosphates. The protein is Formamidopyrimidine-DNA glycosylase of Lactiplantibacillus plantarum (strain ATCC BAA-793 / NCIMB 8826 / WCFS1) (Lactobacillus plantarum).